The primary structure comprises 249 residues: Isoprenyl transferase (249 aa).

Residue aspartate 25 is part of the active site. Aspartate 25 serves as a coordination point for Mg(2+). Substrate is bound by residues 26 to 29, tryptophan 30, arginine 38, histidine 42, and 70 to 72; these read GNGR and STE. Asparagine 73 serves as the catalytic Proton acceptor. Substrate is bound by residues tryptophan 74, arginine 76, arginine 197, and 203–205; that span reads RLS. Glutamate 216 contacts Mg(2+).

The protein belongs to the UPP synthase family. Homodimer. Mg(2+) serves as cofactor.

Catalyzes the condensation of isopentenyl diphosphate (IPP) with allylic pyrophosphates generating different type of terpenoids. The chain is Isoprenyl transferase from Streptococcus pyogenes serotype M3 (strain ATCC BAA-595 / MGAS315).